Reading from the N-terminus, the 274-residue chain is MAVIKMKPTSPGQRAVVKVTRDHLYKGEAFAALLEPQHQKSGRNNNGHITTRHKGGGHKHHYRVVDFKRNKDAIPAKVERIEYDPNRTAHIALVCYADGERRYIIAPRNLEVGATIVSGSEAPIRVGNTLPIRNIPVGSTIHCIELKPGAGAQIARSAGTSATLLAREGTYAQVRMRSGEVRRIHIECRATIGEVANEEHSLRQLGKAGVKRWMGIRPTVRGVAMNPIDHPHGGGEGRTGEGRHAVDPWGNLTKGYRTRNNKRTQVMIVSRRKK.

Disordered stretches follow at residues 37-60 (QHQK…GHKH) and 224-252 (AMNP…WGNL). Positions 50-60 (TTRHKGGGHKH) are enriched in basic residues. Basic and acidic residues predominate over residues 229-246 (DHPHGGGEGRTGEGRHAV).

It belongs to the universal ribosomal protein uL2 family. As to quaternary structure, part of the 50S ribosomal subunit. Forms a bridge to the 30S subunit in the 70S ribosome.

Functionally, one of the primary rRNA binding proteins. Required for association of the 30S and 50S subunits to form the 70S ribosome, for tRNA binding and peptide bond formation. It has been suggested to have peptidyltransferase activity; this is somewhat controversial. Makes several contacts with the 16S rRNA in the 70S ribosome. In Paracidovorax citrulli (strain AAC00-1) (Acidovorax citrulli), this protein is Large ribosomal subunit protein uL2.